Here is a 278-residue protein sequence, read N- to C-terminus: Bifunctional protein FolD (278 aa).

NADP(+) is bound by residues 165 to 167 (GRS) and Ser-190.

It belongs to the tetrahydrofolate dehydrogenase/cyclohydrolase family. As to quaternary structure, homodimer.

It carries out the reaction (6R)-5,10-methylene-5,6,7,8-tetrahydrofolate + NADP(+) = (6R)-5,10-methenyltetrahydrofolate + NADPH. It catalyses the reaction (6R)-5,10-methenyltetrahydrofolate + H2O = (6R)-10-formyltetrahydrofolate + H(+). The protein operates within one-carbon metabolism; tetrahydrofolate interconversion. Its function is as follows. Catalyzes the oxidation of 5,10-methylenetetrahydrofolate to 5,10-methenyltetrahydrofolate and then the hydrolysis of 5,10-methenyltetrahydrofolate to 10-formyltetrahydrofolate. In Clostridium tetani (strain Massachusetts / E88), this protein is Bifunctional protein FolD.